Reading from the N-terminus, the 910-residue chain is Valine--tRNA ligase (910 aa).

Residues 46 to 56 carry the 'HIGH' region motif; the sequence is PNVTGSLHMGH. Residues 539–543 carry the 'KMSKS' region motif; the sequence is KMSKS. K542 is an ATP binding site. Residues 845–909 are a coiled coil; the sequence is DLDILRNKIQ…QMLQERLKML (65 aa).

This sequence belongs to the class-I aminoacyl-tRNA synthetase family. ValS type 1 subfamily. As to quaternary structure, monomer.

The protein resides in the cytoplasm. It catalyses the reaction tRNA(Val) + L-valine + ATP = L-valyl-tRNA(Val) + AMP + diphosphate. In terms of biological role, catalyzes the attachment of valine to tRNA(Val). As ValRS can inadvertently accommodate and process structurally similar amino acids such as threonine, to avoid such errors, it has a 'posttransfer' editing activity that hydrolyzes mischarged Thr-tRNA(Val) in a tRNA-dependent manner. The chain is Valine--tRNA ligase from Synechocystis sp. (strain ATCC 27184 / PCC 6803 / Kazusa).